The chain runs to 429 residues: Serine--tRNA ligase (429 aa).

236–238 (TAE) contacts L-serine. 267 to 269 (RRE) contacts ATP. L-serine is bound at residue glutamate 290. ATP is bound at residue 354 to 357 (EISS). Residue serine 390 participates in L-serine binding.

Belongs to the class-II aminoacyl-tRNA synthetase family. Type-1 seryl-tRNA synthetase subfamily. Homodimer. The tRNA molecule binds across the dimer.

It is found in the cytoplasm. The enzyme catalyses tRNA(Ser) + L-serine + ATP = L-seryl-tRNA(Ser) + AMP + diphosphate + H(+). The catalysed reaction is tRNA(Sec) + L-serine + ATP = L-seryl-tRNA(Sec) + AMP + diphosphate + H(+). It functions in the pathway aminoacyl-tRNA biosynthesis; selenocysteinyl-tRNA(Sec) biosynthesis; L-seryl-tRNA(Sec) from L-serine and tRNA(Sec): step 1/1. In terms of biological role, catalyzes the attachment of serine to tRNA(Ser). Is also able to aminoacylate tRNA(Sec) with serine, to form the misacylated tRNA L-seryl-tRNA(Sec), which will be further converted into selenocysteinyl-tRNA(Sec). The protein is Serine--tRNA ligase of Gloeobacter violaceus (strain ATCC 29082 / PCC 7421).